Reading from the N-terminus, the 460-residue chain is Hydroxyproline dehydrogenase (460 aa).

At lysine 310 the chain carries N6-acetyllysine.

It belongs to the proline oxidase family. FAD is required as a cofactor.

It catalyses the reaction trans-4-hydroxy-L-proline + a quinone = (3R,5S)-1-pyrroline-3-hydroxy-5-carboxylate + a quinol + H(+). The enzyme catalyses L-proline + a quinone = (S)-1-pyrroline-5-carboxylate + a quinol + H(+). Its activity is regulated as follows. Hydroproxyproline dehydrogenase activity is inhibited by THFA,(1R,3R)3-OH-cyclopentane-COOH and 5-OH-1H-pyrazole-3-COOH. In terms of biological role, dehydrogenase that converts trans-4-L-hydroxyproline to delta-1-pyrroline-3-hydroxy-5-carboxylate (Hyp) using ubiquinone-10 as the terminal electron acceptor. Can also use proline as a substrate but with a very much lower efficiency. Does not react with other diastereomers of Hyp: trans-4-D-hydroxyproline and cis-4-L-hydroxyproline. Ubiquininone analogs such as menadione, duroquinone and ubiquinone-1 react more efficiently than oxygen as the terminal electron acceptor during catalysis. The polypeptide is Hydroxyproline dehydrogenase (Homo sapiens (Human)).